Here is a 424-residue protein sequence, read N- to C-terminus: Serine hydroxymethyltransferase 2 (424 aa).

(6S)-5,6,7,8-tetrahydrofolate is bound by residues Leu-125 and 129-131 (GHL). Lys-234 is modified (N6-(pyridoxal phosphate)lysine). Residue Glu-250 participates in (6S)-5,6,7,8-tetrahydrofolate binding.

It belongs to the SHMT family. As to quaternary structure, homodimer. Pyridoxal 5'-phosphate is required as a cofactor.

Its subcellular location is the cytoplasm. The enzyme catalyses (6R)-5,10-methylene-5,6,7,8-tetrahydrofolate + glycine + H2O = (6S)-5,6,7,8-tetrahydrofolate + L-serine. Its pathway is one-carbon metabolism; tetrahydrofolate interconversion. It functions in the pathway amino-acid biosynthesis; glycine biosynthesis; glycine from L-serine: step 1/1. Catalyzes the reversible interconversion of serine and glycine with tetrahydrofolate (THF) serving as the one-carbon carrier. This reaction serves as the major source of one-carbon groups required for the biosynthesis of purines, thymidylate, methionine, and other important biomolecules. Also exhibits THF-independent aldolase activity toward beta-hydroxyamino acids, producing glycine and aldehydes, via a retro-aldol mechanism. This Burkholderia pseudomallei (strain 1710b) protein is Serine hydroxymethyltransferase 2.